The sequence spans 463 residues: L-seryl-tRNA(Sec) selenium transferase (463 aa).

Lys-295 is modified (N6-(pyridoxal phosphate)lysine).

Belongs to the SelA family. As to quaternary structure, homodecamer; pentamer of dimers. Binds only one seryl-tRNA(Sec) per dimer. Requires pyridoxal 5'-phosphate as cofactor.

The protein localises to the cytoplasm. It catalyses the reaction L-seryl-tRNA(Sec) + selenophosphate + H(+) = L-selenocysteinyl-tRNA(Sec) + phosphate. It functions in the pathway aminoacyl-tRNA biosynthesis; selenocysteinyl-tRNA(Sec) biosynthesis; selenocysteinyl-tRNA(Sec) from L-seryl-tRNA(Sec) (bacterial route): step 1/1. In terms of biological role, converts seryl-tRNA(Sec) to selenocysteinyl-tRNA(Sec) required for selenoprotein biosynthesis. This Escherichia coli O45:K1 (strain S88 / ExPEC) protein is L-seryl-tRNA(Sec) selenium transferase.